A 654-amino-acid chain; its full sequence is Insulin receptor substrate 1 (654 aa).

The region spanning 3-107 (DIKKCGYLRK…WYQAILEVQA (105 aa)) is the PH domain. Tyr36 carries the post-translational modification Phosphotyrosine. The IRS-type PTB domain maps to 126-230 (FREVWQVSVR…EAMKSLSEEF (105 aa)). Residues 228 to 329 (EEFRPRTKSQ…EYGSSPGVLE (102 aa)) form a disordered region. Positions 235-245 (KSQSLSSTPIS) are enriched in polar residues. Position 276 is a phosphoserine (Ser276). Over residues 307–321 (NESSADYGSASSDEY) the composition is skewed to polar residues. Tyr345 is modified (phosphotyrosine; by INSR). 6 consecutive short sequence motifs (YXXM motif) follow at residues 345 to 348 (YISM), 384 to 387 (YAMM), 398 to 401 (YMPM), 411 to 414 (YMPM), 430 to 433 (YVMM), and 466 to 469 (YMNM). Tyr398 and Tyr411 each carry phosphotyrosine; by INSR. Residue Tyr430 is modified to Phosphotyrosine. Disordered regions lie at residues 473–494 (SRSASSTPPPQEAFLSSPGGPC) and 507–532 (YKMEPQPSARASCSSSSDSLEEVNAG). Residues 514–524 (SARASCSSSSD) are compositionally biased toward low complexity. Phosphotyrosine; by INSR is present on Tyr563.

As to quaternary structure, interacts with the NPXY motif of tyrosine-phosphorylated igf1r and insr via the PTB domain. Binds to phosphatidylinositol 3-kinase p85 subunit via the phosphorylated YXXM motifs.

In terms of biological role, may mediate the control of various cellular processes by insulin. When phosphorylated by the insulin receptor binds specifically to various cellular proteins containing SH2 domains such as phosphatidylinositol 3-kinase p85 subunit or grb2. Activates phosphatidylinositol 3-kinase when bound to the regulatory p85 subunit. The sequence is that of Insulin receptor substrate 1 from Xenopus tropicalis (Western clawed frog).